We begin with the raw amino-acid sequence, 219 residues long: ATP-dependent dethiobiotin synthetase BioD (219 aa).

12-17 (DLGKTH) contributes to the ATP binding site. Residue threonine 16 participates in Mg(2+) binding. Lysine 37 is a catalytic residue. A substrate-binding site is contributed by serine 41. Residues aspartate 52, 115 to 118 (EGAG), and 175 to 176 (SE) contribute to the ATP site. Aspartate 52 and glutamate 115 together coordinate Mg(2+).

It belongs to the dethiobiotin synthetase family. In terms of assembly, homodimer. Mg(2+) is required as a cofactor.

Its subcellular location is the cytoplasm. It catalyses the reaction (7R,8S)-7,8-diammoniononanoate + CO2 + ATP = (4R,5S)-dethiobiotin + ADP + phosphate + 3 H(+). It functions in the pathway cofactor biosynthesis; biotin biosynthesis; biotin from 7,8-diaminononanoate: step 1/2. Its function is as follows. Catalyzes a mechanistically unusual reaction, the ATP-dependent insertion of CO2 between the N7 and N8 nitrogen atoms of 7,8-diaminopelargonic acid (DAPA, also called 7,8-diammoniononanoate) to form a ureido ring. In Caulobacter vibrioides (strain ATCC 19089 / CIP 103742 / CB 15) (Caulobacter crescentus), this protein is ATP-dependent dethiobiotin synthetase BioD.